We begin with the raw amino-acid sequence, 116 residues long: Phosphoribosyl-AMP cyclohydrolase (116 aa).

Mg(2+) is bound at residue D80. A Zn(2+)-binding site is contributed by C81. Positions 82 and 84 each coordinate Mg(2+). Residues C98 and C105 each coordinate Zn(2+).

This sequence belongs to the PRA-CH family. As to quaternary structure, homodimer. The cofactor is Mg(2+). Zn(2+) serves as cofactor.

It localises to the cytoplasm. It catalyses the reaction 1-(5-phospho-beta-D-ribosyl)-5'-AMP + H2O = 1-(5-phospho-beta-D-ribosyl)-5-[(5-phospho-beta-D-ribosylamino)methylideneamino]imidazole-4-carboxamide. The protein operates within amino-acid biosynthesis; L-histidine biosynthesis; L-histidine from 5-phospho-alpha-D-ribose 1-diphosphate: step 3/9. Catalyzes the hydrolysis of the adenine ring of phosphoribosyl-AMP. This Trichormus variabilis (strain ATCC 29413 / PCC 7937) (Anabaena variabilis) protein is Phosphoribosyl-AMP cyclohydrolase.